The sequence spans 224 residues: Response regulator protein GraR (224 aa).

Residues 2-115 (QILLVEDDNT…VLIAKLQAIY (114 aa)) form the Response regulatory domain. Aspartate 51 carries the post-translational modification 4-aspartylphosphate. The segment at residues 126–224 (KRTLTWQDAV…KVGKGYMAHE (99 aa)) is a DNA-binding region (ompR/PhoB-type). Phosphothreonine is present on residues threonine 128, threonine 130, and threonine 149.

Interacts with GraX. Post-translationally, phosphorylated by GraS. Phosphorylated by Stk1; phosphorylation increases the DNA-binding activity of GraR.

It localises to the cytoplasm. Member of the two-component regulatory system GraR/GraS involved in resistance against cationic antimicrobial peptides (CAMPs). Upon phosphorylation by GraS, functions as a transcription regulator by direct binding to promoter regions of target genes such as adhesins, exoproteins, transporters, toxins, and proteins involved in cell wall synthesis. Down-regulates the expression of many genes involved in RNA and amino acid synthesis or glycolysis. The polypeptide is Response regulator protein GraR (graR) (Staphylococcus aureus (strain Mu3 / ATCC 700698)).